Reading from the N-terminus, the 882-residue chain is Alanine--tRNA ligase (882 aa).

The Zn(2+) site is built by His-563, His-567, Cys-665, and His-669.

It belongs to the class-II aminoacyl-tRNA synthetase family. It depends on Zn(2+) as a cofactor.

The protein localises to the cytoplasm. It carries out the reaction tRNA(Ala) + L-alanine + ATP = L-alanyl-tRNA(Ala) + AMP + diphosphate. Functionally, catalyzes the attachment of alanine to tRNA(Ala) in a two-step reaction: alanine is first activated by ATP to form Ala-AMP and then transferred to the acceptor end of tRNA(Ala). Also edits incorrectly charged Ser-tRNA(Ala) and Gly-tRNA(Ala) via its editing domain. In Synechococcus sp. (strain RCC307), this protein is Alanine--tRNA ligase.